Consider the following 282-residue polypeptide: Protein DOG1-like 3 (282 aa).

The DOG1 domain occupies 11–254 (EQLQKGCYYE…HEWGRVREEQ (244 aa)).

The polypeptide is Protein DOG1-like 3 (Arabidopsis thaliana (Mouse-ear cress)).